We begin with the raw amino-acid sequence, 295 residues long: Bifunctional protein FolD (295 aa).

Residues 172-174, serine 197, and isoleucine 238 contribute to the NADP(+) site; that span reads GRS.

Belongs to the tetrahydrofolate dehydrogenase/cyclohydrolase family. Homodimer.

It carries out the reaction (6R)-5,10-methylene-5,6,7,8-tetrahydrofolate + NADP(+) = (6R)-5,10-methenyltetrahydrofolate + NADPH. The catalysed reaction is (6R)-5,10-methenyltetrahydrofolate + H2O = (6R)-10-formyltetrahydrofolate + H(+). It functions in the pathway one-carbon metabolism; tetrahydrofolate interconversion. Catalyzes the oxidation of 5,10-methylenetetrahydrofolate to 5,10-methenyltetrahydrofolate and then the hydrolysis of 5,10-methenyltetrahydrofolate to 10-formyltetrahydrofolate. The polypeptide is Bifunctional protein FolD (Rickettsia akari (strain Hartford)).